Here is a 229-residue protein sequence, read N- to C-terminus: Probable calcium-binding protein CML22 (229 aa).

EF-hand domains lie at 53-88, 89-124, 145-180, and 184-219; these read EGLR…LKLS, LSDE…IYLL, SIFD…EDYP, and SPSH…WVGL. Residues Asp-66, Asp-68, Asn-70, Thr-72, and Glu-77 each coordinate Ca(2+).

Its function is as follows. Potential calcium sensor. The polypeptide is Probable calcium-binding protein CML22 (CML22) (Arabidopsis thaliana (Mouse-ear cress)).